We begin with the raw amino-acid sequence, 220 residues long: Protein-L-isoaspartate O-methyltransferase (220 aa).

Ser-69 is a catalytic residue.

The protein belongs to the methyltransferase superfamily. L-isoaspartyl/D-aspartyl protein methyltransferase family.

The protein resides in the cytoplasm. The catalysed reaction is [protein]-L-isoaspartate + S-adenosyl-L-methionine = [protein]-L-isoaspartate alpha-methyl ester + S-adenosyl-L-homocysteine. Functionally, catalyzes the methyl esterification of L-isoaspartyl residues in peptides and proteins that result from spontaneous decomposition of normal L-aspartyl and L-asparaginyl residues. It plays a role in the repair and/or degradation of damaged proteins. The sequence is that of Protein-L-isoaspartate O-methyltransferase from Alcanivorax borkumensis (strain ATCC 700651 / DSM 11573 / NCIMB 13689 / SK2).